The following is a 266-amino-acid chain: Cell wall synthesis protein Wag31 (266 aa).

Residues 31-64 (FLDLVENELTQLIEENSDLRQRIEELDHELAAGG) are a coiled coil. Thr77 is subject to Phosphothreonine. Residues 152–203 (TAEATVAEAQQRADAMLADAQTRSEVQSRQAQEKADALQAEAERKHSEIMGA) are a coiled coil. Positions 239 to 266 (ELGQRGSAAPVDSNADAGGFDQFNRGNN) are disordered.

It belongs to the DivIVA family. In terms of assembly, forms homooligomers. In terms of processing, phosphorylated by PknA.

It is found in the cytoplasm. In terms of biological role, important for maintaining cell shape and cell wall integrity by localizing peptidoglycan synthesis to the cell poles. This chain is Cell wall synthesis protein Wag31 (wag31), found in Mycobacterium leprae (strain TN).